Reading from the N-terminus, the 242-residue chain is ATP synthase subunit a (242 aa).

6 helical membrane-spanning segments follow: residues 29–49, 84–104, 114–134, 140–160, 189–209, and 210–230; these read SSIYMLLASILALTYFYLAFY, FIPLVFSLFIFILFCNLLGMT, IIVTFTLAILVFLTVTIVGFV, FLTLFLPHGTPLWLAPLMIVI, VIAGFTVSLMIYLKFLPIPLM, and MILIGFEIFVAILQAYIFTIL.

Belongs to the ATPase A chain family. In terms of assembly, F-type ATPases have 2 components, CF(1) - the catalytic core - and CF(0) - the membrane proton channel. CF(1) has five subunits: alpha(3), beta(3), gamma(1), delta(1), epsilon(1). CF(0) has three main subunits: a(1), b(2) and c(9-12). The alpha and beta chains form an alternating ring which encloses part of the gamma chain. CF(1) is attached to CF(0) by a central stalk formed by the gamma and epsilon chains, while a peripheral stalk is formed by the delta and b chains.

It is found in the cell inner membrane. In terms of biological role, key component of the proton channel; it plays a direct role in the translocation of protons across the membrane. The sequence is that of ATP synthase subunit a from Rickettsia massiliae (strain Mtu5).